Consider the following 430-residue polypeptide: Enolase (430 aa).

Gln-164 is a binding site for (2R)-2-phosphoglycerate. Glu-208 (proton donor) is an active-site residue. Residues Asp-245, Glu-288, and Asp-315 each contribute to the Mg(2+) site. The (2R)-2-phosphoglycerate site is built by Lys-340, Arg-369, Ser-370, and Lys-391. Catalysis depends on Lys-340, which acts as the Proton acceptor.

This sequence belongs to the enolase family. Mg(2+) serves as cofactor.

It is found in the cytoplasm. Its subcellular location is the secreted. The protein resides in the cell surface. It carries out the reaction (2R)-2-phosphoglycerate = phosphoenolpyruvate + H2O. It participates in carbohydrate degradation; glycolysis; pyruvate from D-glyceraldehyde 3-phosphate: step 4/5. Functionally, catalyzes the reversible conversion of 2-phosphoglycerate (2-PG) into phosphoenolpyruvate (PEP). It is essential for the degradation of carbohydrates via glycolysis. The protein is Enolase of Thermococcus kodakarensis (strain ATCC BAA-918 / JCM 12380 / KOD1) (Pyrococcus kodakaraensis (strain KOD1)).